A 273-amino-acid polypeptide reads, in one-letter code: Shikimate dehydrogenase (NADP(+)) (273 aa).

Shikimate is bound by residues 19–21 (SKS) and T66. K70 acts as the Proton acceptor in catalysis. The shikimate site is built by N91 and D107. NADP(+) is bound by residues 131–135 (GAGGA) and M218. Y220 is a binding site for shikimate. Position 242 (G242) interacts with NADP(+).

This sequence belongs to the shikimate dehydrogenase family. In terms of assembly, homodimer.

It carries out the reaction shikimate + NADP(+) = 3-dehydroshikimate + NADPH + H(+). Its pathway is metabolic intermediate biosynthesis; chorismate biosynthesis; chorismate from D-erythrose 4-phosphate and phosphoenolpyruvate: step 4/7. Functionally, involved in the biosynthesis of the chorismate, which leads to the biosynthesis of aromatic amino acids. Catalyzes the reversible NADPH linked reduction of 3-dehydroshikimate (DHSA) to yield shikimate (SA). This Buchnera aphidicola subsp. Acyrthosiphon pisum (strain 5A) protein is Shikimate dehydrogenase (NADP(+)).